A 459-amino-acid chain; its full sequence is Interleukin-1 receptor-associated kinase 4 (459 aa).

N-acetylmethionine is present on Met-1. In terms of domain architecture, Death spans 20 to 104 (RKLSDFIDPQ…APATLLLPDA (85 aa)). Lys-34 is subject to N6-acetyllysine. The segment at 115-161 (REAATVAQTHGPCQEKDRTSVMPMPKLEHSCEPPDSSSPDNRSVESS) is disordered. Residues 186–454 (SAGGNRMGEG…PDIAKVQQLL (269 aa)) form the Protein kinase domain. Residues 192-200 (MGEGGFGVV) and Lys-213 each bind ATP. Catalysis depends on Asp-311, which acts as the Proton acceptor. Residues 313 to 316 (KSAN) and Asp-329 each bind ATP. A phosphothreonine mark is found at Thr-342 and Thr-345. A Phosphoserine modification is found at Ser-346.

It belongs to the protein kinase superfamily. TKL Ser/Thr protein kinase family. Pelle subfamily. As to quaternary structure, associates with MYD88 and IRAK2 to form a ternary complex called the Myddosome. Once phosphorylated, IRAK4 dissociates from the receptor complex and then associates with the TNF receptor-associated factor 6 (TRAF6), IRAK1, and PELI1; this intermediate complex is required for subsequent NF-kappa-B activation. Direct binding of SMAD6 to PELI1 prevents complex formation and hence negatively regulates IL1R-TLR signaling and eventually NF-kappa-B-mediated gene expression. Interacts with IL1RL1. Interacts (when phosphorylated) with IRAK1. May interact (when phosphorylated) with IRAK3. Mg(2+) is required as a cofactor. In terms of processing, phosphorylated.

It is found in the cytoplasm. The enzyme catalyses L-seryl-[protein] + ATP = O-phospho-L-seryl-[protein] + ADP + H(+). It carries out the reaction L-threonyl-[protein] + ATP = O-phospho-L-threonyl-[protein] + ADP + H(+). Serine/threonine-protein kinase that plays a critical role in initiating innate immune response against foreign pathogens. Involved in Toll-like receptor (TLR) and IL-1R signaling pathways. Is rapidly recruited by MYD88 to the receptor-signaling complex upon TLR activation to form the Myddosome together with IRAK2. Phosphorylates initially IRAK1, thus stimulating the kinase activity and intensive autophosphorylation of IRAK1. Phosphorylates E3 ubiquitin ligases Pellino proteins (PELI1, PELI2 and PELI3) to promote pellino-mediated polyubiquitination of IRAK1. Then, the ubiquitin-binding domain of IKBKG/NEMO binds to polyubiquitinated IRAK1 bringing together the IRAK1-MAP3K7/TAK1-TRAF6 complex and the NEMO-IKKA-IKKB complex. In turn, MAP3K7/TAK1 activates IKKs (CHUK/IKKA and IKBKB/IKKB) leading to NF-kappa-B nuclear translocation and activation. Alternatively, phosphorylates TIRAP to promote its ubiquitination and subsequent degradation. Phosphorylates NCF1 and regulates NADPH oxidase activation after LPS stimulation suggesting a similar mechanism during microbial infections. The chain is Interleukin-1 receptor-associated kinase 4 (Irak4) from Mus musculus (Mouse).